Here is a 127-residue protein sequence, read N- to C-terminus: Small ribosomal subunit protein uS11 (127 aa).

It belongs to the universal ribosomal protein uS11 family. In terms of assembly, part of the 30S ribosomal subunit. Interacts with proteins S7 and S18. Binds to IF-3.

Functionally, located on the platform of the 30S subunit, it bridges several disparate RNA helices of the 16S rRNA. Forms part of the Shine-Dalgarno cleft in the 70S ribosome. This Rickettsia rickettsii (strain Iowa) protein is Small ribosomal subunit protein uS11.